Here is a 762-residue protein sequence, read N- to C-terminus: Probable disease resistance protein At1g61300 (762 aa).

The N-myristoyl glycine moiety is linked to residue G2. 2 S-palmitoyl cysteine lipidation sites follow: C3 and C4. Positions 26 to 329 (NINRNSFGVE…CEGFIGEDQV (304 aa)) constitute an NB-ARC domain. 68–75 (GMGGVGKT) serves as a coordination point for ATP. 5 LRR repeats span residues 401–422 (AVRRMSLMDNHIEEITCESKCS), 423–444 (ELTTLFLQSNQLKNLSGEFIRY), 447–470 (KLVVLDLSYNRDFNKLPEQISGLV), 471–493 (SLQFLDLSNTSIKQLPVGLKKLK), and 494–516 (KLTFLNLAYTVRLCSISGISRLL).

Belongs to the disease resistance NB-LRR family.

It is found in the cell membrane. Functionally, probable disease resistance protein. The chain is Probable disease resistance protein At1g61300 from Arabidopsis thaliana (Mouse-ear cress).